A 231-amino-acid chain; its full sequence is Ribose-5-phosphate isomerase A (231 aa).

Substrate-binding positions include 31 to 34 (TGST), 86 to 89 (DGAD), and 100 to 103 (KGLG). Residue E109 is the Proton acceptor of the active site. A substrate-binding site is contributed by K127.

It belongs to the ribose 5-phosphate isomerase family. In terms of assembly, homodimer.

The catalysed reaction is aldehydo-D-ribose 5-phosphate = D-ribulose 5-phosphate. It functions in the pathway carbohydrate degradation; pentose phosphate pathway; D-ribose 5-phosphate from D-ribulose 5-phosphate (non-oxidative stage): step 1/1. Its function is as follows. Catalyzes the reversible conversion of ribose-5-phosphate to ribulose 5-phosphate. This is Ribose-5-phosphate isomerase A from Gluconobacter oxydans (strain 621H) (Gluconobacter suboxydans).